A 754-amino-acid polypeptide reads, in one-letter code: ToMV susceptible protein tm-1(GCR26) (754 aa).

The N-terminal inhibitory domain NN stretch occupies residues 1 to 201 (MATAQSNSPR…AGMVIGRLES (201 aa)). Residues 18 to 20 (DTK), T55, R92, and 124 to 127 (GSGG) each bind ATP. Residues 211–431 (KFTVGVTMFG…VDSFLEMSPK (221 aa)) are N-terminal inhibitory domain NC.

The protein belongs to the UPF0261 family. In terms of assembly, homodimer. (Microbial infection) Binds, via an ATP bridge, to the tobamoviruses avirulent (Avr) replication proteins (large and small subunits, e.g. tobacco mild green mosaic virus (TMGMV) AC P18339 and pepper mild mottle virus (PMMoV) AC P89657) to inhibit their function after the translation of tobamoviruses RNA, but before the viral replication complex formation on the membrane surfaces; this interaction is not possible with resistance-breaking strains replication proteins.

Functionally, inhibitor of viral RNA replication which confers resistance to some tobamoviruses including tobacco mild green mosaic virus (TMGMV) and pepper mild mottle virus (PMMoV), but not to tomato mosaic virus (ToMV strains L, ToMV0 and ToMV1-2) and tobacco mosaic virus (TMV). Prevents tobamoviruses RNA replication by affecting the association of tobamoviruses replication proteins (large and small subunits) with host membrane-associated proteins (e.g. TOM1, TOM2A and ARL8), thus inhibiting the replication complex formation on the membranes and avoiding viral negative-strand RNA synthesis. The polypeptide is ToMV susceptible protein tm-1(GCR26) (Solanum lycopersicum (Tomato)).